The primary structure comprises 258 residues: MLNSVPLVIAQHSTQDDTSLLNSIGNKWGFPVVSHSEKPAEGFYLQIQNGVLGLADASEKKVLPVEVDFASPASLYRKQHGGGRKEPIVKAIGLKGNEGWHVVDATPGLGRDAFVLVSVGCKVTMIERSPIVAALLEDGIRRLALSFPELAAKMSLQHGNSAEVMQYFTGENVNAIYLDPMFPHKKKSALVKKEMRLFQQLLGHDPDADALLPPALKLATHRVVVKRPNSADVLAGEKPSMAIESKKHRFDVYLCQKP.

S-adenosyl-L-methionine is bound by residues 111–112 (RD), 127–128 (ER), and D179.

The protein belongs to the methyltransferase superfamily. RsmJ family.

It is found in the cytoplasm. The catalysed reaction is guanosine(1516) in 16S rRNA + S-adenosyl-L-methionine = N(2)-methylguanosine(1516) in 16S rRNA + S-adenosyl-L-homocysteine + H(+). In terms of biological role, specifically methylates the guanosine in position 1516 of 16S rRNA. The polypeptide is Ribosomal RNA small subunit methyltransferase J (Alteromonas mediterranea (strain DSM 17117 / CIP 110805 / LMG 28347 / Deep ecotype)).